A 97-amino-acid chain; its full sequence is ATP-dependent Clp protease adapter protein ClpS (97 aa).

This sequence belongs to the ClpS family. Binds to the N-terminal domain of the chaperone ClpA.

Functionally, involved in the modulation of the specificity of the ClpAP-mediated ATP-dependent protein degradation. The chain is ATP-dependent Clp protease adapter protein ClpS from Nautilia profundicola (strain ATCC BAA-1463 / DSM 18972 / AmH).